The chain runs to 209 residues: Eukaryotic translation initiation factor 4E (209 aa).

This sequence belongs to the eukaryotic initiation factor 4E family. As to quaternary structure, eIF4F is a multi-subunit complex, the composition of which varies with external and internal environmental conditions. It is composed of at least eIF4A, eIF4E and eIF4G. eIF4E is also known to interact with other partners.

Its function is as follows. Recognizes and binds the 7-methylguanosine-containing mRNA cap during an early step in the initiation of protein synthesis and facilitates ribosome binding by inducing the unwinding of the mRNAs secondary structures. The protein is Eukaryotic translation initiation factor 4E (TIF45) of Candida glabrata (strain ATCC 2001 / BCRC 20586 / JCM 3761 / NBRC 0622 / NRRL Y-65 / CBS 138) (Yeast).